The following is a 223-amino-acid chain: MHQRLATLAAARLYLCTDARRERGDLAEFADAALAGGVDVIQLRDKGSPGEQRFGPLEARDELAACEILADAARRHGALFAVNDRADIARAAGADVLHLGQGDLPLDVARAFVGPDVLLGLSSHDRDQMTAAAAGPADYFCVGPCWPTPTKPGRAAPGLALVRAAAELRTGKPWFAIGGIDAQRLPEVLDAGARRVVVVRAITAADDPAAAARRLSSALAAAR.

Residues 42–46 and asparagine 83 each bind 4-amino-2-methyl-5-(diphosphooxymethyl)pyrimidine; that span reads QLRDK. The Mg(2+) site is built by aspartate 84 and aspartate 103. Position 122 (serine 122) interacts with 4-amino-2-methyl-5-(diphosphooxymethyl)pyrimidine. Residue 148 to 150 participates in 2-[(2R,5Z)-2-carboxy-4-methylthiazol-5(2H)-ylidene]ethyl phosphate binding; that stretch reads TPT. Lysine 151 serves as a coordination point for 4-amino-2-methyl-5-(diphosphooxymethyl)pyrimidine. Position 179 (glycine 179) interacts with 2-[(2R,5Z)-2-carboxy-4-methylthiazol-5(2H)-ylidene]ethyl phosphate.

Belongs to the thiamine-phosphate synthase family. The cofactor is Mg(2+).

The enzyme catalyses 2-[(2R,5Z)-2-carboxy-4-methylthiazol-5(2H)-ylidene]ethyl phosphate + 4-amino-2-methyl-5-(diphosphooxymethyl)pyrimidine + 2 H(+) = thiamine phosphate + CO2 + diphosphate. It catalyses the reaction 2-(2-carboxy-4-methylthiazol-5-yl)ethyl phosphate + 4-amino-2-methyl-5-(diphosphooxymethyl)pyrimidine + 2 H(+) = thiamine phosphate + CO2 + diphosphate. It carries out the reaction 4-methyl-5-(2-phosphooxyethyl)-thiazole + 4-amino-2-methyl-5-(diphosphooxymethyl)pyrimidine + H(+) = thiamine phosphate + diphosphate. Its pathway is cofactor biosynthesis; thiamine diphosphate biosynthesis; thiamine phosphate from 4-amino-2-methyl-5-diphosphomethylpyrimidine and 4-methyl-5-(2-phosphoethyl)-thiazole: step 1/1. Functionally, condenses 4-methyl-5-(beta-hydroxyethyl)thiazole monophosphate (THZ-P) and 2-methyl-4-amino-5-hydroxymethyl pyrimidine pyrophosphate (HMP-PP) to form thiamine monophosphate (TMP). The polypeptide is Thiamine-phosphate synthase (Mycobacterium avium (strain 104)).